Here is a 257-residue protein sequence, read N- to C-terminus: Putative transcription factor R430 (257 aa).

Disordered regions lie at residues 1–35 (MEKF…DNNS) and 58–77 (SLKS…PNKS). The segment covering 7–25 (TDNTTDNTTDNTTDNTTDN) has biased composition (low complexity). Positions 26-35 (TTDKLTDNNS) are enriched in basic and acidic residues.

It belongs to the nucleo-cytoplasmic large DNA viruses (NCLDVs) VLTF-3 family.

In terms of biological role, putative transcription factor. This is Putative transcription factor R430 from Acanthamoeba polyphaga (Amoeba).